The sequence spans 947 residues: Valine--tRNA ligase (947 aa).

Residues 45-55 (PNVTGSLHMGH) carry the 'HIGH' region motif. The 'KMSKS' region motif lies at 591 to 595 (KMSKS). Lys594 contacts ATP.

It belongs to the class-I aminoacyl-tRNA synthetase family. ValS type 1 subfamily. In terms of assembly, monomer.

The protein localises to the cytoplasm. It carries out the reaction tRNA(Val) + L-valine + ATP = L-valyl-tRNA(Val) + AMP + diphosphate. In terms of biological role, catalyzes the attachment of valine to tRNA(Val). As ValRS can inadvertently accommodate and process structurally similar amino acids such as threonine, to avoid such errors, it has a 'posttransfer' editing activity that hydrolyzes mischarged Thr-tRNA(Val) in a tRNA-dependent manner. This Rhizobium meliloti (strain 1021) (Ensifer meliloti) protein is Valine--tRNA ligase.